The sequence spans 232 residues: MKERRAPQPVVARCKLVLVGDVQCGKTAMLQVLAKDCYPETYVPTVFENYTACLETEEQRVELSLWDTSGSPYYDNVRPLCYSDSDAVLLCFDISRPETVDSALKKWRTEILDYCPSTRVLLIGCKTDLRTDLSTLMELSHQKQAPISYEQGCAIAKQLGAEIYLEGSAFTSEKSIHSIFRTASMVCLNKPSPMPPKSPVRSLSKRLLHLPSRSELISSTFKKEKAKSCSIM.

GTP-binding positions include 23–28 (QCGKTA), 38–45 (YPETYVPT), 67–71 (DTSGS), 125–128 (CKTD), and 169–170 (AF). Positions 42–50 (YVPTVFENY) match the Effector region motif. Residue C229 is modified to Cysteine methyl ester. C229 is lipidated: S-geranylgeranyl cysteine. Residues 230-232 (SIM) constitute a propeptide, removed in mature form.

This sequence belongs to the small GTPase superfamily. Rho family. In terms of assembly, binds GRB7 and PLXNB1. Interacts with PLXNA2. Interacts with UBXD5.

The protein localises to the cell membrane. It localises to the cytoplasm. The protein resides in the cytoskeleton. Lacks intrinsic GTPase activity. Has a low affinity for GDP, and constitutively binds GTP. Controls rearrangements of the actin cytoskeleton. Induces the Rac-dependent neuritic process formation in part by disruption of the cortical actin filaments. Causes the formation of many neuritic processes from the cell body with disruption of the cortical actin filaments. In Bos taurus (Bovine), this protein is Rho-related GTP-binding protein Rho6 (RND1).